We begin with the raw amino-acid sequence, 252 residues long: Ciliogenesis and planar polarity effector 2 (252 aa).

Positions 46 to 252 are small GTPase-like; the sequence is QMNVDLVRYK…LRETSSEIIV (207 aa). Residues 62–67 and 173–176 contribute to the GTP site; these read TGVGKS and TKFD.

The protein belongs to the small GTPase superfamily. Rab family.

The protein resides in the cytoplasm. The protein localises to the cytoskeleton. Its subcellular location is the cilium basal body. In terms of biological role, potential effector of the planar cell polarity signaling pathway. Plays a role in targeted membrane trafficking most probably at the level of vesicle fusion with membranes. Involved in cilium biogenesis by regulating the transport of cargo proteins to the basal body and to the apical tips of cilia. More generally involved in exocytosis in secretory cells. This chain is Ciliogenesis and planar polarity effector 2 (cplane2), found in Danio rerio (Zebrafish).